The following is a 167-amino-acid chain: SAR-endolysin (167 aa).

Residues 11 to 31 (VIAAISGGAIAIASVLITGPG) traverse the membrane as a helical; Signal-anchor for type II membrane protein segment. Catalysis depends on proton donor/acceptor residues Glu-37 and Asp-46.

Belongs to the glycosyl hydrolase 24 family.

Its subcellular location is the host cell inner membrane. It catalyses the reaction Hydrolysis of (1-&gt;4)-beta-linkages between N-acetylmuramic acid and N-acetyl-D-glucosamine residues in a peptidoglycan and between N-acetyl-D-glucosamine residues in chitodextrins.. Signal-arrest-release (SAR) endolysin with lysozyme activity that degrades host peptidoglycans and participates with the pinholin and spanin proteins in the sequential events which lead to programmed host cell lysis releasing the mature viral particles. Once the pinholin has permeabilized the host cell membrane, the SAR-endolysin is released into the periplasm where it breaks down the peptidoglycan layer. In Bacteriophage PS34, this protein is SAR-endolysin (19).